The following is a 342-amino-acid chain: S-adenosylmethionine:tRNA ribosyltransferase-isomerase (342 aa).

Belongs to the QueA family. Monomer.

The protein resides in the cytoplasm. It carries out the reaction 7-aminomethyl-7-carbaguanosine(34) in tRNA + S-adenosyl-L-methionine = epoxyqueuosine(34) in tRNA + adenine + L-methionine + 2 H(+). Its pathway is tRNA modification; tRNA-queuosine biosynthesis. In terms of biological role, transfers and isomerizes the ribose moiety from AdoMet to the 7-aminomethyl group of 7-deazaguanine (preQ1-tRNA) to give epoxyqueuosine (oQ-tRNA). In Streptococcus pyogenes serotype M12 (strain MGAS2096), this protein is S-adenosylmethionine:tRNA ribosyltransferase-isomerase.